Here is a 632-residue protein sequence, read N- to C-terminus: Protein NSP-INTERACTING KINASE 3 (632 aa).

A signal peptide spans 1 to 25 (MEGVRFVVWRLGFLVFVWFFDISSA). Residues 26 to 238 (TLSPTGVNYE…GTRTNGHHVA (213 aa)) are Extracellular-facing. Asn96 carries an N-linked (GlcNAc...) asparagine glycan. LRR repeat units follow at residues 97 to 121 (LTYL…IGRL), 122 to 145 (EKLQ…LGEL), 147 to 168 (NLNY…SLSK), and 169 to 193 (IEGL…SART). N-linked (GlcNAc...) asparagine glycosylation is found at Asn131, Asn155, Asn181, and Asn210. Residues 239–259 (LAFAASFSAAFFVFFTSGMFL) traverse the membrane as a helical segment. The Cytoplasmic portion of the chain corresponds to 260-632 (WWRYRRNKQI…VEAIELSGPR (373 aa)). Position 298 is a phosphothreonine (Thr298). A Protein kinase domain is found at 301–584 (FNSKNILGRG…EGDGLAERWE (284 aa)). Position 307–315 (307–315 (LGRGGYGIV)) interacts with ATP. Thr324 is subject to Phosphothreonine. Residue Lys329 participates in ATP binding. 2 positions are modified to phosphoserine: Ser382 and Ser385. Residues 415–495 (YLHEQCDPKI…DVFGFGILLL (81 aa)) form an interaction with geminivirus NSP protein region. The active-site Proton acceptor is the Asp428. Phosphothreonine occurs at positions 461, 462, and 467. The residue at position 475 (Tyr475) is a Phosphotyrosine. Residue Ser477 is modified to Phosphoserine. Residue Thr478 is modified to Phosphothreonine. Ser482 carries the post-translational modification Phosphoserine. Thr557 carries the post-translational modification Phosphothreonine.

The protein belongs to the protein kinase superfamily. Ser/Thr protein kinase family. As to quaternary structure, oligomer. Interacts with geminivirus nuclear shuttle protein (NSP). Post-translationally, autophosphorylated. As to expression, expressed in seedlings, leaves and flowers.

The protein resides in the cell membrane. It catalyses the reaction L-seryl-[protein] + ATP = O-phospho-L-seryl-[protein] + ADP + H(+). The catalysed reaction is L-threonyl-[protein] + ATP = O-phospho-L-threonyl-[protein] + ADP + H(+). With respect to regulation, inhibited by the viral nuclear shuttle protein (NSP) that binds to the region required for oligomerization. Its function is as follows. Involved in defense response to geminivirus infection. This chain is Protein NSP-INTERACTING KINASE 3 (NIK3), found in Arabidopsis thaliana (Mouse-ear cress).